Consider the following 293-residue polypeptide: Energy-coupling factor transporter ATP-binding protein EcfA2 (293 aa).

Positions 3–246 (ITFQKVEHRY…ADELEKIGVD (244 aa)) constitute an ABC transporter domain. Residue 40 to 47 (GHTGSGKS) coordinates ATP.

Belongs to the ABC transporter superfamily. Energy-coupling factor EcfA family. As to quaternary structure, forms a stable energy-coupling factor (ECF) transporter complex composed of 2 membrane-embedded substrate-binding proteins (S component), 2 ATP-binding proteins (A component) and 2 transmembrane proteins (T component).

It localises to the cell membrane. ATP-binding (A) component of a common energy-coupling factor (ECF) ABC-transporter complex. Unlike classic ABC transporters this ECF transporter provides the energy necessary to transport a number of different substrates. The chain is Energy-coupling factor transporter ATP-binding protein EcfA2 from Bacillus cereus (strain ATCC 14579 / DSM 31 / CCUG 7414 / JCM 2152 / NBRC 15305 / NCIMB 9373 / NCTC 2599 / NRRL B-3711).